The following is an 893-amino-acid chain: Nitrate reductase [NADPH] (893 aa).

Residues 1–83 form a disordered region; it reads MSVTTQQPAV…KPTPDAHVPR (83 aa). Over residues 55–65 the composition is skewed to pro residues; it reads PDFPLPPPANP. The segment covering 71–83 has biased composition (basic and acidic residues); the sequence is DIDKPTPDAHVPR. Cys-170 provides a ligand contact to Mo-molybdopterin. A Cytochrome b5 heme-binding domain is found at 536-611; the sequence is NRIVELDELK…MPAYHIGTLS (76 aa). Heme contacts are provided by His-571 and His-594. The region spanning 641–752 is the FAD-binding FR-type domain; the sequence is RTWSKALLSS…KGPIGKFEYL (112 aa). FAD contacts are provided by residues 695 to 698, 712 to 716, 726 to 728, Ser-776, and Thr-779; these read RSYT, LIKIY, and KMT. 863–872 lines the NADP(+) pocket; that stretch reads LVLVCGPEGL.

Belongs to the nitrate reductase family. Homodimer. Requires FAD as cofactor. Heme is required as a cofactor. Mo-molybdopterin serves as cofactor.

The enzyme catalyses nitrite + NADP(+) + H2O = nitrate + NADPH + H(+). Its function is as follows. Nitrate reductase is a key enzyme involved in the first step of nitrate assimilation in plants, fungi and bacteria. This chain is Nitrate reductase [NADPH] (NIAD), found in Leptosphaeria maculans (Blackleg fungus).